A 551-amino-acid polypeptide reads, in one-letter code: Eukaryotic translation initiation factor 3 subunit D-2 (551 aa).

The tract at residues 108–152 is disordered; the sequence is RTRGRTGRGTPNIASLGGSTAGGATASSTKYGKGRHTRNTQNVGR. The segment covering 115-136 has biased composition (low complexity); the sequence is RGTPNIASLGGSTAGGATASST. The interval 290-304 is RNA gate; the sequence is QFDLLTVNETSVEPP. The disordered stretch occupies residues 527 to 551; that stretch reads PENAFDSDRDEEEESSEPLSNSNDN.

This sequence belongs to the eIF-3 subunit D family. In terms of assembly, component of the eukaryotic translation initiation factor 3 (eIF-3) complex. The eIF-3 complex interacts with pix.

The protein localises to the cytoplasm. In terms of biological role, mRNA cap-binding component of the eukaryotic translation initiation factor 3 (eIF-3) complex, which is involved in protein synthesis of a specialized repertoire of mRNAs and, together with other initiation factors, stimulates binding of mRNA and methionyl-tRNAi to the 40S ribosome. The eIF-3 complex specifically targets and initiates translation of a subset of mRNAs involved in cell proliferation. In the eIF-3 complex, eif3d specifically recognizes and binds the 7-methylguanosine cap of a subset of mRNAs. This Drosophila simulans (Fruit fly) protein is Eukaryotic translation initiation factor 3 subunit D-2.